The chain runs to 1053 residues: Mediator of RNA polymerase II transcription subunit 16 (1053 aa).

A disordered region spans residues 139–170 (KTEGNTEKNKDTKQIGNGSGTNGHGDSPINTP). The segment covering 142–151 (GNTEKNKDTK) has biased composition (basic and acidic residues).

The protein belongs to the Mediator complex subunit 16 family. In terms of assembly, component of the Mediator complex.

It localises to the nucleus. Component of the Mediator complex, a coactivator involved in the regulated transcription of nearly all RNA polymerase II-dependent genes. Mediator functions as a bridge to convey information from gene-specific regulatory proteins to the basal RNA polymerase II transcription machinery. Mediator is recruited to promoters by direct interactions with regulatory proteins and serves as a scaffold for the assembly of a functional preinitiation complex with RNA polymerase II and the general transcription factors. This Candida albicans (strain SC5314 / ATCC MYA-2876) (Yeast) protein is Mediator of RNA polymerase II transcription subunit 16 (SIN4).